The following is a 580-amino-acid chain: High affinity choline transporter 1 (580 aa).

Over 1–6 (MPFHVE) the chain is Extracellular. The helical transmembrane segment at 7 to 27 (GLVAIILFYLLIFLVGIWAAW) threads the bilayer. The Cytoplasmic portion of the chain corresponds to 28-48 (KTKNSGNAEERSEAIIVGGRD). The chain crosses the membrane as a helical span at residues 49–69 (IGLLVGGFTMTATWVGGGYIN). The Extracellular segment spans residues 70–81 (GTAEAVYGPGCG). A helical transmembrane segment spans residues 82–102 (LAWAQAPIGYSLSLILGGLFF). The Cytoplasmic portion of the chain corresponds to 103-125 (AKPMRSKGYVTMLDPFQQIYGKR). The helical transmembrane segment at 126–146 (MGGLLFIPALMGEMFWAAAIF) threads the bilayer. Residues 147-164 (SALGATISVIIDVDVNIS) are Extracellular-facing. A helical transmembrane segment spans residues 165-185 (VIVSALIAILYTLVGGLYSVA). Residues 186–191 (YTDVVQ) lie on the Cytoplasmic side of the membrane. A helical membrane pass occupies residues 192-212 (LFCIFIGLWISVPFALSHPAV). Residues 213-237 (TDIGFTAVHAKYQSPWLGTIESVEV) are Extracellular-facing. Residues 238–258 (YTWLDNFLLLMLGGIPWQAYF) form a helical membrane-spanning segment. The Cytoplasmic segment spans residues 259–274 (QRVLSSSSATYAQVLS). The chain crosses the membrane as a helical span at residues 275-295 (FLAAFGCLVMALPAICIGAIG). At 296 to 317 (ASTDWNQTAYGFPDPKTKEEAD) the chain is on the extracellular side. N-linked (GlcNAc...) asparagine glycosylation occurs at Asn301. Residues 318–338 (MILPIVLQYLCPVYISFFGLG) traverse the membrane as a helical segment. The Cytoplasmic portion of the chain corresponds to 339–376 (AVSAAVMSSADSSILSASSMFARNIYQLSFRQNASDKE). The chain crosses the membrane as a helical span at residues 377–397 (IVWVMRITVFVFGASATAMAL). Topologically, residues 398 to 406 (LTKTVYGLW) are extracellular. The helical transmembrane segment at 407 to 427 (YLSSDLVYIIIFPQLLCVLFI) threads the bilayer. Residues 428–435 (KGTNTYGA) lie on the Cytoplasmic side of the membrane. A helical transmembrane segment spans residues 436–456 (VAGYIFGLFLRITGGEPYLYL). Over 457-481 (QPLIFYPGYYPDKNGIYNQRFPFKT) the chain is Extracellular. Residues 482-502 (LSMVTSFFTNICVSYLAKYLF) form a helical membrane-spanning segment. Residues 502–580 (FESGTLPPKL…EGSGTEDNLQ (79 aa)) are mediates interaction with SEC14L1. Over 503–580 (ESGTLPPKLD…EGSGTEDNLQ (78 aa)) the chain is Cytoplasmic. The Dileucine-like motif motif lies at 527 to 532 (DKTILV).

It belongs to the sodium:solute symporter (SSF) (TC 2.A.21) family. As to quaternary structure, homooligomerizes at cell surface. Interacts with SEC14L1; may regulate SLC5A7. In terms of processing, phosphorylated. Expressed in basal forebrain, brain stem, spinal chord, and striatum. Specific for cholinergic neurons.

It is found in the presynaptic cell membrane. Its subcellular location is the cell projection. The protein resides in the axon. The protein localises to the early endosome membrane. It localises to the cytoplasmic vesicle. It is found in the secretory vesicle. Its subcellular location is the synaptic vesicle membrane. The catalysed reaction is choline(out) + n Na(+)(out) = choline(in) + n Na(+)(in). Choline uptake activity is regulated by SLC5A7/CHT1 internalization (inactive form) from the cell surface and recycling of internalized SLC5A7/CHT1 into the cell surface (active form). Activated by extracellular chloride ion. Specifically inhibited by nanomolar concentrations of hemicholinium 3. High-affinity Na(+)-coupled choline transmembrane symporter. Functions as an electrogenic, voltage-dependent transporter with variable charge/choline stoichiometry. Choline uptake and choline-induced current is also Cl(-)-dependent where Cl(-) is likely a regulatory ion rather than cotransported ion. Plays a critical role in acetylcholine (ACh) synthesis by taking up the substrate choline from the synaptic cleft into the presynaptic nerve terminals after neurotransmitter release. SLC5A7/CHT1-mediated choline high-affinity transport in cholinergic neurons is the rate-limiting step for production of ACh, thereby facilitating communication by subsequent action potentials. Localized predominantly in presynaptic terminal intracellular organelles, and translocated to the plasma membrane in active form in response to neuronal activity. This chain is High affinity choline transporter 1, found in Rattus norvegicus (Rat).